A 521-amino-acid chain; its full sequence is Bifunctional purine biosynthesis protein PurH (521 aa).

One can recognise an MGS-like domain in the interval 1–147; that stretch reads MAVIKRALIS…KNNRDVTVVV (147 aa).

The protein belongs to the PurH family.

It carries out the reaction (6R)-10-formyltetrahydrofolate + 5-amino-1-(5-phospho-beta-D-ribosyl)imidazole-4-carboxamide = 5-formamido-1-(5-phospho-D-ribosyl)imidazole-4-carboxamide + (6S)-5,6,7,8-tetrahydrofolate. The catalysed reaction is IMP + H2O = 5-formamido-1-(5-phospho-D-ribosyl)imidazole-4-carboxamide. The protein operates within purine metabolism; IMP biosynthesis via de novo pathway; 5-formamido-1-(5-phospho-D-ribosyl)imidazole-4-carboxamide from 5-amino-1-(5-phospho-D-ribosyl)imidazole-4-carboxamide (10-formyl THF route): step 1/1. Its pathway is purine metabolism; IMP biosynthesis via de novo pathway; IMP from 5-formamido-1-(5-phospho-D-ribosyl)imidazole-4-carboxamide: step 1/1. In Syntrophotalea carbinolica (strain DSM 2380 / NBRC 103641 / GraBd1) (Pelobacter carbinolicus), this protein is Bifunctional purine biosynthesis protein PurH.